The chain runs to 137 residues: Large ribosomal subunit protein uL16 (137 aa).

This sequence belongs to the universal ribosomal protein uL16 family. In terms of assembly, part of the 50S ribosomal subunit.

Functionally, binds 23S rRNA and is also seen to make contacts with the A and possibly P site tRNAs. This is Large ribosomal subunit protein uL16 from Leuconostoc mesenteroides subsp. mesenteroides (strain ATCC 8293 / DSM 20343 / BCRC 11652 / CCM 1803 / JCM 6124 / NCDO 523 / NBRC 100496 / NCIMB 8023 / NCTC 12954 / NRRL B-1118 / 37Y).